Reading from the N-terminus, the 145-residue chain is Peptide methionine sulfoxide reductase MsrB (145 aa).

The MsrB domain maps to 4–127 (SEELKQRIGD…NSAALKFIPY (124 aa)). Cys116 serves as the catalytic Nucleophile.

It belongs to the MsrB Met sulfoxide reductase family.

The enzyme catalyses L-methionyl-[protein] + [thioredoxin]-disulfide + H2O = L-methionyl-(R)-S-oxide-[protein] + [thioredoxin]-dithiol. The protein is Peptide methionine sulfoxide reductase MsrB of Streptococcus pyogenes serotype M6 (strain ATCC BAA-946 / MGAS10394).